Consider the following 483-residue polypeptide: Probable Xaa-Pro aminopeptidase MCYG_06503 (483 aa).

4 residues coordinate Mn(2+): aspartate 233, aspartate 244, glutamate 409, and glutamate 453.

This sequence belongs to the peptidase M24B family. Mn(2+) is required as a cofactor.

It carries out the reaction Release of any N-terminal amino acid, including proline, that is linked to proline, even from a dipeptide or tripeptide.. Its function is as follows. Catalyzes the removal of a penultimate prolyl residue from the N-termini of peptides. This Arthroderma otae (strain ATCC MYA-4605 / CBS 113480) (Microsporum canis) protein is Probable Xaa-Pro aminopeptidase MCYG_06503.